Consider the following 199-residue polypeptide: Transgelin-3 (199 aa).

A Calponin-homology (CH) domain is found at 24–136; the sequence is ADLENKLVDW…RTLMALGSVA (113 aa). Ser163 is subject to Phosphoserine. The Calponin-like repeat unit spans residues 174–199; that stretch reads IGLQMGSNKGASQAGMTGYGMPRQIM. Polar residues predominate over residues 178 to 188; sequence MGSNKGASQAG. Residues 178 to 199 are disordered; sequence MGSNKGASQAGMTGYGMPRQIM.

The protein belongs to the calponin family.

In Bos taurus (Bovine), this protein is Transgelin-3 (TAGLN3).